Reading from the N-terminus, the 926-residue chain is Protein O-mannosyl-transferase Tmtc3 (926 aa).

Positions methionine 1–alanine 26 are disordered. Over methionine 1–glutamate 36 the chain is Cytoplasmic. Residues phenylalanine 37 to valine 57 form a helical membrane-spanning segment. Over phenylalanine 58–alanine 114 the chain is Extracellular. The helical transmembrane segment at leucine 115–tryptophan 135 threads the bilayer. Topologically, residues arginine 136–alanine 169 are cytoplasmic. A helical transmembrane segment spans residues phenylalanine 170–valine 190. The Extracellular segment spans residues glycine 191–arginine 192. The helical transmembrane segment at alanine 193–glycine 213 threads the bilayer. Topologically, residues aspartate 214–asparagine 222 are cytoplasmic. A run of 2 helical transmembrane segments spans residues tryptophan 223–leucine 239 and cysteine 240–valine 259. Residues histidine 260 to arginine 303 lie on the Cytoplasmic side of the membrane. The helical transmembrane segment at leucine 304 to serine 324 threads the bilayer. Over glutamine 325–glutamine 345 the chain is Extracellular. The chain crosses the membrane as a helical span at residues leucine 346–cysteine 366. At cysteine 367–arginine 384 the chain is on the cytoplasmic side. The helical transmembrane segment at asparagine 385 to threonine 405 threads the bilayer. Over arginine 406–glycine 419 the chain is Extracellular. Residues tryptophan 420 to alanine 440 form a helical membrane-spanning segment. Residues glutamate 441 to arginine 442 are Cytoplasmic-facing. Residues isoleucine 443–glutamine 463 form a helical membrane-spanning segment. The Extracellular portion of the chain corresponds to arginine 464–serine 926. 9 TPR repeats span residues alanine 514–aspartate 547, isoleucine 548–alanine 581, leucine 596–tyrosine 630, valine 631–asparagine 664, alanine 665–histidine 698, glutamate 736–phenylalanine 769, arginine 770–histidine 803, lysine 805–asparagine 838, and threonine 839–glutamate 872. Residues asparagine 609 and asparagine 645 are each glycosylated (N-linked (GlcNAc...) asparagine).

The protein belongs to the TMTC family.

It localises to the membrane. The protein localises to the endoplasmic reticulum. It catalyses the reaction a di-trans,poly-cis-dolichyl beta-D-mannosyl phosphate + L-seryl-[protein] = 3-O-(alpha-D-mannosyl)-L-seryl-[protein] + a di-trans,poly-cis-dolichyl phosphate + H(+). The enzyme catalyses a di-trans,poly-cis-dolichyl beta-D-mannosyl phosphate + L-threonyl-[protein] = 3-O-(alpha-D-mannosyl)-L-threonyl-[protein] + a di-trans,poly-cis-dolichyl phosphate + H(+). It functions in the pathway protein modification; protein glycosylation. In terms of biological role, transfers mannosyl residues to the hydroxyl group of serine or threonine residues. This chain is Protein O-mannosyl-transferase Tmtc3, found in Drosophila melanogaster (Fruit fly).